Consider the following 402-residue polypeptide: MTKVSKERLKELEESGDVMELNLGPQHPSTHGVLRLKLRLEGEVVLSCDPVIGYLHTGVEKECESRTYHQVFTLVDRLDYLSGPAEEQAFAGALERLMNIEVPERAQTIRIILLELSRIASHLLWAGTSALELNMSSVFMYSFAEREKILDLFEQVSGARMFPSLWRIGGLAKDLNSDFISHLKEFISGFQKIWKELDRLLTDNFVWCKRLQGVAVIDQEICKQYMCTGPVLRASGISYDIRKAYPYLGYENYNFDIPTHIDGDSYARYLVRMEEMLQSISIIEQAIARLKPGVVLTNDRKVALPPRKELARSMEAVIHQFKLISEGLHPPVGSVYNCVESARGELGHYVISDGTPKPYRLRVRSPSFSHVEVLKKVLRGHVISDVVVAIASVDPILGDVDR.

Belongs to the complex I 49 kDa subunit family. In terms of assembly, NDH-1 is composed of 14 different subunits. Subunits NuoB, C, D, E, F, and G constitute the peripheral sector of the complex.

The protein localises to the cell inner membrane. The enzyme catalyses a quinone + NADH + 5 H(+)(in) = a quinol + NAD(+) + 4 H(+)(out). Its function is as follows. NDH-1 shuttles electrons from NADH, via FMN and iron-sulfur (Fe-S) centers, to quinones in the respiratory chain. The immediate electron acceptor for the enzyme in this species is believed to be ubiquinone. Couples the redox reaction to proton translocation (for every two electrons transferred, four hydrogen ions are translocated across the cytoplasmic membrane), and thus conserves the redox energy in a proton gradient. This is NADH-quinone oxidoreductase subunit D from Protochlamydia amoebophila (strain UWE25).